A 147-amino-acid polypeptide reads, in one-letter code: Lysozyme C-1 (147 aa).

Residues 1–18 (MKALIILGFLFLSVAVQG) form the signal peptide. Residues 19 to 147 (KVFERCELAR…VSSYVEGCTL (129 aa)) form the C-type lysozyme domain. 4 disulfide bridges follow: Cys24/Cys145, Cys48/Cys133, Cys83/Cys99, and Cys95/Cys113. Active-site residues include Glu53 and Asp71.

It belongs to the glycosyl hydrolase 22 family. In terms of assembly, monomer. As to expression, stomach-specific.

It carries out the reaction Hydrolysis of (1-&gt;4)-beta-linkages between N-acetylmuramic acid and N-acetyl-D-glucosamine residues in a peptidoglycan and between N-acetyl-D-glucosamine residues in chitodextrins.. In terms of biological role, lysozymes have primarily a bacteriolytic function; those in tissues and body fluids are associated with the monocyte-macrophage system and enhance the activity of immunoagents. The chain is Lysozyme C-1 (LYZ1) from Bos taurus (Bovine).